The chain runs to 123 residues: U11/U12 small nuclear ribonucleoprotein 25 kDa protein (123 aa).

The 92-residue stretch at 32–123 folds into the Ubiquitin-like domain; sequence MTVRVCKMDG…VSFIKKLRQK (92 aa).

In terms of assembly, component of the U11/U12 snRNPs that are part of the U12-type spliceosome.

The protein localises to the nucleus. In Bos taurus (Bovine), this protein is U11/U12 small nuclear ribonucleoprotein 25 kDa protein (SNRNP25).